The following is a 211-amino-acid chain: MSQFKDKSILKSNEVPEEMFTCISGSTDTNSEMKTVISKEKNEEKSLVKTKNKVNRIRLFLNYHVKELPIMDHSIAERNSEMMKTVMRYKTSYREVTRFLIGSWLLFAEKLIPPFNMKAIIIIETDQELVDVADFEGIEILLGNNIQSCLDSFYMRFYKEDLILYNTANELLLLIDNFKIPKYFAKLDMNQVRLKKIIEKKYMSLIKAGKL.

This is an uncharacterized protein from Lactuca sativa (Garden lettuce).